A 306-amino-acid chain; its full sequence is ATP synthase F(1) complex subunit gamma, mitochondrial (306 aa).

A mitochondrion-targeting transit peptide spans 1–17; that stretch reads MNSASKLFVVLASPANQ.

Belongs to the ATPase gamma chain family. As to quaternary structure, component of the ATP synthase complex composed at least of ATP5F1A/subunit alpha, ATP5F1B/subunit beta, ATP5MC1/subunit c (homooctomer), MT-ATP6/subunit a, MT-ATP8/subunit 8, ATP5ME/subunit e, ATP5MF/subunit f, ATP5MG/subunit g, ATP5MK/subunit k, ATP5MJ/subunit j, ATP5F1C/subunit gamma, ATP5F1D/subunit delta, ATP5F1E/subunit epsilon, ATP5PF/subunit F6, ATP5PB/subunit b, ATP5PD/subunit d, ATP5PO/subunit OSCP. ATP synthase complex consists of a soluble F(1) head domain (subunits alpha(3) and beta(3)) - the catalytic core - and a membrane F(0) domain - the membrane proton channel (subunits c, a, 8, e, f, g, k and j). These two domains are linked by a central stalk (subunits gamma, delta, and epsilon) rotating inside the F1 region and a stationary peripheral stalk (subunits F6, b, d, and OSCP).

It localises to the mitochondrion inner membrane. Subunit gamma, of the mitochondrial membrane ATP synthase complex (F(1)F(0) ATP synthase or Complex V) that produces ATP from ADP in the presence of a proton gradient across the membrane which is generated by electron transport complexes of the respiratory chain. ATP synthase complex consist of a soluble F(1) head domain - the catalytic core - and a membrane F(1) domain - the membrane proton channel. These two domains are linked by a central stalk rotating inside the F(1) region and a stationary peripheral stalk. During catalysis, ATP synthesis in the catalytic domain of F(1) is coupled via a rotary mechanism of the central stalk subunits to proton translocation. In vivo, can only synthesize ATP although its ATP hydrolase activity can be activated artificially in vitro. With the central stalk subunit delta, is essential for the biogenesis of F(1) catalytic part of the ATP synthase complex namely in the formation of F1 assembly intermediate. The chain is ATP synthase F(1) complex subunit gamma, mitochondrial from Dictyostelium discoideum (Social amoeba).